A 264-amino-acid chain; its full sequence is MKFAIQSRRDAQSNELMELAKTYLQDFGLTYDEEAPEIVVSIGGDGTLLHAFHRYSHLLDQVAFVGIHTGHLGFYADWKPSELEKLVLSIAKKDFNVVEYPLLEVKVEHHNAASNTYLALNEATVKSPDVTLVMDVELNGNQFERNRGDGHSVSTPSGSTAYNKALGGAIIHPTLAALQITEIASINNRVFRTVGSPLILPAHHHCVLRPVNEQNFNMTVDHLQITQGDVKAIVFNVANERVRFARFRPFPFWERVHESFVANE.

Catalysis depends on Asp45, which acts as the Proton acceptor. NAD(+) is bound by residues 45–46 (DG), His50, 121–122 (NE), Arg147, Asp149, Ala184, and Gln224.

This sequence belongs to the NAD kinase family. A divalent metal cation is required as a cofactor.

Its subcellular location is the cytoplasm. The catalysed reaction is NAD(+) + ATP = ADP + NADP(+) + H(+). Its function is as follows. Involved in the regulation of the intracellular balance of NAD and NADP, and is a key enzyme in the biosynthesis of NADP. Catalyzes specifically the phosphorylation on 2'-hydroxyl of the adenosine moiety of NAD to yield NADP. In Lysinibacillus sphaericus (strain C3-41), this protein is NAD kinase.